Consider the following 496-residue polypeptide: NAD(P)H-quinone oxidoreductase subunit 2 A, chloroplastic (496 aa).

A run of 14 helical transmembrane segments spans residues Ser13 to Leu33, Thr41 to Leu61, Ile83 to Ile103, Val110 to Ala130, Leu133 to Tyr153, Leu168 to Leu188, Val213 to Phe233, Pro245 to Thr265, Trp279 to Val299, Met307 to Asp327, Tyr338 to Leu358, Leu380 to Gly400, Leu413 to Ile435, and Met470 to Ile490.

It belongs to the complex I subunit 2 family. As to quaternary structure, NDH is composed of at least 16 different subunits, 5 of which are encoded in the nucleus.

The protein localises to the plastid. Its subcellular location is the chloroplast thylakoid membrane. The enzyme catalyses a plastoquinone + NADH + (n+1) H(+)(in) = a plastoquinol + NAD(+) + n H(+)(out). It carries out the reaction a plastoquinone + NADPH + (n+1) H(+)(in) = a plastoquinol + NADP(+) + n H(+)(out). In terms of biological role, NDH shuttles electrons from NAD(P)H:plastoquinone, via FMN and iron-sulfur (Fe-S) centers, to quinones in the photosynthetic chain and possibly in a chloroplast respiratory chain. The immediate electron acceptor for the enzyme in this species is believed to be plastoquinone. Couples the redox reaction to proton translocation, and thus conserves the redox energy in a proton gradient. The protein is NAD(P)H-quinone oxidoreductase subunit 2 A, chloroplastic of Psilotum nudum (Whisk fern).